Reading from the N-terminus, the 141-residue chain is HTH-type transcriptional repressor NsrR (141 aa).

Residues 2–129 (QLTSFTDYAL…DDCSIAELLD (128 aa)) form the HTH rrf2-type domain. The H-T-H motif DNA-binding region spans 28–51 (ITDVTELFGVSRNHMVKVINRLGQ). Residues Cys-91, Cys-96, and Cys-102 each contribute to the [2Fe-2S] cluster site.

[2Fe-2S] cluster is required as a cofactor.

Nitric oxide-sensitive repressor of genes involved in protecting the cell against nitrosative stress. May require iron for activity. This chain is HTH-type transcriptional repressor NsrR, found in Vibrio vulnificus (strain CMCP6).